Consider the following 135-residue polypeptide: Hydroxylaminobenzene mutase HabA (135 aa).

Helical transmembrane passes span 5–25 (LFAS…LVPV), 33–55 (VAGH…LWPY), 67–87 (FWLL…AALW), and 113–133 (FLLF…LIGI).

The protein localises to the cell membrane. The enzyme catalyses N-phenylhydroxylamine = 2-aminophenol. Functionally, catalyzes the rearrangement of hydroxylaminobenzene to 2-aminophenol. Involved in the degradation of nitrobenzene. This Ectopseudomonas oleovorans (Pseudomonas oleovorans) protein is Hydroxylaminobenzene mutase HabA (habA).